We begin with the raw amino-acid sequence, 151 residues long: SsrA-binding protein (151 aa).

The disordered stretch occupies residues Gly-121–Ala-151. Residues Asp-126–Arg-142 are compositionally biased toward basic and acidic residues.

This sequence belongs to the SmpB family.

It is found in the cytoplasm. In terms of biological role, required for rescue of stalled ribosomes mediated by trans-translation. Binds to transfer-messenger RNA (tmRNA), required for stable association of tmRNA with ribosomes. tmRNA and SmpB together mimic tRNA shape, replacing the anticodon stem-loop with SmpB. tmRNA is encoded by the ssrA gene; the 2 termini fold to resemble tRNA(Ala) and it encodes a 'tag peptide', a short internal open reading frame. During trans-translation Ala-aminoacylated tmRNA acts like a tRNA, entering the A-site of stalled ribosomes, displacing the stalled mRNA. The ribosome then switches to translate the ORF on the tmRNA; the nascent peptide is terminated with the 'tag peptide' encoded by the tmRNA and targeted for degradation. The ribosome is freed to recommence translation, which seems to be the essential function of trans-translation. The protein is SsrA-binding protein of Chromobacterium violaceum (strain ATCC 12472 / DSM 30191 / JCM 1249 / CCUG 213 / NBRC 12614 / NCIMB 9131 / NCTC 9757 / MK).